The primary structure comprises 407 residues: Imidazolonepropionase (407 aa).

Residues H73 and H75 each contribute to the Fe(3+) site. Zn(2+)-binding residues include H73 and H75. R82, Y145, and H178 together coordinate 4-imidazolone-5-propanoate. Y145 is an N-formimidoyl-L-glutamate binding site. H243 provides a ligand contact to Fe(3+). Residue H243 coordinates Zn(2+). Q246 is a 4-imidazolone-5-propanoate binding site. D318 lines the Fe(3+) pocket. Residue D318 participates in Zn(2+) binding. Positions 320 and 322 each coordinate N-formimidoyl-L-glutamate. Residue T323 coordinates 4-imidazolone-5-propanoate.

It belongs to the metallo-dependent hydrolases superfamily. HutI family. The cofactor is Zn(2+). Requires Fe(3+) as cofactor.

The protein localises to the cytoplasm. The catalysed reaction is 4-imidazolone-5-propanoate + H2O = N-formimidoyl-L-glutamate. It functions in the pathway amino-acid degradation; L-histidine degradation into L-glutamate; N-formimidoyl-L-glutamate from L-histidine: step 3/3. Functionally, catalyzes the hydrolytic cleavage of the carbon-nitrogen bond in imidazolone-5-propanoate to yield N-formimidoyl-L-glutamate. It is the third step in the universal histidine degradation pathway. The chain is Imidazolonepropionase from Serratia proteamaculans (strain 568).